A 122-amino-acid polypeptide reads, in one-letter code: Large ribosomal subunit protein uL14c (122 aa).

This sequence belongs to the universal ribosomal protein uL14 family. As to quaternary structure, part of the 50S ribosomal subunit.

It is found in the plastid. Its subcellular location is the chloroplast. In terms of biological role, binds to 23S rRNA. This is Large ribosomal subunit protein uL14c from Carica papaya (Papaya).